Reading from the N-terminus, the 249-residue chain is Phosphate import ATP-binding protein PstB 2 (249 aa).

In terms of domain architecture, ABC transporter spans 4–244 (FDIENLDLYY…PSDDRTRGYV (241 aa)). 36–43 (GPSGCGKS) contacts ATP.

This sequence belongs to the ABC transporter superfamily. Phosphate importer (TC 3.A.1.7) family. In terms of assembly, the complex is composed of two ATP-binding proteins (PstB), two transmembrane proteins (PstC and PstA) and a solute-binding protein (PstS).

The protein resides in the cell inner membrane. It carries out the reaction phosphate(out) + ATP + H2O = ADP + 2 phosphate(in) + H(+). Part of the ABC transporter complex PstSACB involved in phosphate import. Responsible for energy coupling to the transport system. In Vibrio vulnificus (strain CMCP6), this protein is Phosphate import ATP-binding protein PstB 2.